The primary structure comprises 2126 residues: Phthioceranic/hydroxyphthioceranic acid synthase (2126 aa).

Residues 24-447 form the Ketosynthase family 3 (KS3) domain; sequence VTPVAVIGMA…GTNVHAVVEQ (424 aa). Cys196 functions as the Acyl-thioester intermediate; for beta-ketoacyl synthase activity in the catalytic mechanism. Residues His331 and His367 each act as for beta-ketoacyl synthase activity in the active site. The interval 449–549 is linker domain (LD); it reads PQTEAQPHAA…VYQPAVGQDD (101 aa). The interval 550–849 is acyltransferase (AT); the sequence is RGPVWLFSGQ…VAALAGMRRE (300 aa). Ser641 functions as the Acyl-ester intermediate; for acyltransferase activity in the catalytic mechanism. The tract at residues 909–1191 is dehydratase (DH); it reads STVAVHPLLG…LAVCGLRIGT (283 aa). Positions 914 to 1032 are N-terminal hotdog fold; sequence HPLLGAHVRL…RRASAVLQQV (119 aa). The 285-residue stretch at 914–1198 folds into the PKS/mFAS DH domain; the sequence is HPLLGAHVRL…IGTGVSERDK (285 aa). His947 acts as the Proton acceptor; for dehydratase activity in catalysis. Residues 1051-1198 are C-terminal hotdog fold; sequence PCRVDGEDLR…IGTGVSERDK (148 aa). The active-site Proton donor; for dehydratase activity is Asp1115. The pseudo beta-ketoacyl reductase (PsiKR) stretch occupies residues 1227–1398; the sequence is KWLLISDCAA…SEEDETAWRD (172 aa). The tract at residues 1426–1750 is enoylreductase (ER); sequence SGMRLQIRTP…EHTGKLVLHI (325 aa). The beta-ketoacyl reductase (KR) stretch occupies residues 1772 to 2019; it reads GSYIITGGLG…AERSRFFEVF (248 aa). NADP(+) contacts are provided by residues 1780–1783, 1803–1806, 1831–1832, and 1904–1905; these read LGGL, SRTQ, DI, and FS. The region spanning 2040 to 2126 is the Carrier domain; it reads DEWPARLRQL…DAPAAALSSQ (87 aa). Ser2075 is subject to O-(pantetheine 4'-phosphoryl)serine.

Requires pantetheine 4'-phosphate as cofactor.

The enzyme catalyses hexadecanoyl-[(hydroxy)phthioceranic acid synthase] + 7 (S)-methylmalonyl-CoA + 14 NADPH + 21 H(+) = C37-phthioceranyl-[(hydroxy)phthioceranic acid synthase] + 7 CO2 + 14 NADP(+) + 7 CoA + 7 H2O. It carries out the reaction hexadecanoyl-[(hydroxy)phthioceranic acid synthase] + 8 (S)-methylmalonyl-CoA + 16 NADPH + 24 H(+) = C40-phthioceranyl-[(hydroxy)phthioceranic acid synthase] + 8 CO2 + 16 NADP(+) + 8 CoA + 8 H2O. The sequence is that of Phthioceranic/hydroxyphthioceranic acid synthase (pks2) from Mycobacterium bovis (strain BCG / Pasteur 1173P2).